Consider the following 131-residue polypeptide: Profilin-9 (131 aa).

Cysteines 13 and 115 form a disulfide. Residues 81–97 carry the Involved in PIP2 interaction motif; the sequence is AVTRGKKGAGGITIKKT. Threonine 111 is modified (phosphothreonine).

This sequence belongs to the profilin family. Occurs in many kinds of cells as a complex with monomeric actin in a 1:1 ratio. Post-translationally, phosphorylated by MAP kinases.

The protein localises to the cytoplasm. The protein resides in the cytoskeleton. Binds to actin and affects the structure of the cytoskeleton. At high concentrations, profilin prevents the polymerization of actin, whereas it enhances it at low concentrations. This is Profilin-9 from Phleum pratense (Common timothy).